A 235-amino-acid chain; its full sequence is Large ribosomal subunit protein uL1 (235 aa).

This sequence belongs to the universal ribosomal protein uL1 family. In terms of assembly, part of the 50S ribosomal subunit.

Its function is as follows. Binds directly to 23S rRNA. The L1 stalk is quite mobile in the ribosome, and is involved in E site tRNA release. Protein L1 is also a translational repressor protein, it controls the translation of the L11 operon by binding to its mRNA. This is Large ribosomal subunit protein uL1 from Micrococcus luteus (strain ATCC 4698 / DSM 20030 / JCM 1464 / CCM 169 / CCUG 5858 / IAM 1056 / NBRC 3333 / NCIMB 9278 / NCTC 2665 / VKM Ac-2230) (Micrococcus lysodeikticus).